Reading from the N-terminus, the 347-residue chain is NADH-ubiquinone oxidoreductase chain 2 (347 aa).

The next 11 helical transmembrane spans lie at 1–21 (MNPL…IITM), 25–45 (HWLT…PLIM), 59–79 (YFLI…INFM), 96–116 (TIIL…FWVP), 123–143 (LLST…SILY), 153–173 (IILA…LNQT), 178–198 (IMAY…IYNP), 200–220 (LMLL…TILI), 239–259 (ILMM…PLSG), 278–298 (ISLT…RLIY), and 325–345 (FLPT…MMFI).

Belongs to the complex I subunit 2 family. Core subunit of respiratory chain NADH dehydrogenase (Complex I) which is composed of 45 different subunits. Interacts with TMEM242.

The protein localises to the mitochondrion inner membrane. The catalysed reaction is a ubiquinone + NADH + 5 H(+)(in) = a ubiquinol + NAD(+) + 4 H(+)(out). Functionally, core subunit of the mitochondrial membrane respiratory chain NADH dehydrogenase (Complex I) that is believed to belong to the minimal assembly required for catalysis. Complex I functions in the transfer of electrons from NADH to the respiratory chain. The immediate electron acceptor for the enzyme is believed to be ubiquinone. This Oryzorictes hova (Hova rice tenrec) protein is NADH-ubiquinone oxidoreductase chain 2.